The primary structure comprises 874 residues: MTSERYNAREAEPRWQRQWDEKAIFATKNDDPRPKYYVLEMFPYPSGRIHIGHVRNYTLGDVLARFMRAKGFNVLHPMGWDAFGLPAENAAIERKVAPKAWTYDNIAAMKKQLRSIGLSLDWAREFATCDPSYYKHQQKMFLDFMQAGLVEREQRKVNWDPVDMTVLANEQVIDGRGWRSGAVVEQREMNQWVFKITKYSQELLDALDGLDRWPDKVRLMQRNWIGRSEGLLIRFALDPQTTPAGETELKIFTTRPDTLFGAKFMAISADHPLAQAAAAKNPELAAFIAEIKRIGTAQEAIDTAEKQGFDTGIRAVHPFDPSWTLPVYVANFVLMEYGTGAIFGCPAHDQRDLDFVNKYGLGNTPVVCPEGQDPASFVITDTAFDGDGRLINSRFLDGMTIAQAKDEVAKRLEAEQRGGAAVGERQVNFRLRDWGISRQRYWGCPIPVIHCPTCDVVPVPAKDLPVVLPDDVTFDKPGNALDHHPTWKHVTCPKCGGKATRETDTMDTFVDSSWYFARFTDPWNETAPTTPDVANRMMPVDQYIGGVEHAILHLLYSRFFTRAMKATGHVAMDEPFAGMFTQGMVVHETYQKADGTYVNPAEVKIEVGGNGRRAVLTATGEDITIGPIEKMSKSKKNTVDPDDIIESYGADVARWFMLSDSPPDRDVIWSDERVQGAARFVQRLWRLVNESVAAGQEAPSSRPATFGPDALALRKAAHGALDKVTGGIERLHFNVCLAHIREFANALAEVLARPAKPAPDLAWAIREAAQILVQLFSPMMPHLAEECWQVLGQGGLISEASWPQIERDLLVEDSVTLVVQVNGKKRGEVTVASNAQNPEIESAVLALDAVKLALDGKPVRKVIIVPKRIVNVVG.

Residues 43 to 53 (PYPSGRIHIGH) carry the 'HIGH' region motif. Residues 630-634 (KMSKS) carry the 'KMSKS' region motif. Lys633 serves as a coordination point for ATP.

The protein belongs to the class-I aminoacyl-tRNA synthetase family.

The protein resides in the cytoplasm. The catalysed reaction is tRNA(Leu) + L-leucine + ATP = L-leucyl-tRNA(Leu) + AMP + diphosphate. In Bradyrhizobium sp. (strain BTAi1 / ATCC BAA-1182), this protein is Leucine--tRNA ligase.